Here is a 777-residue protein sequence, read N- to C-terminus: MAPVQAADEMYDSNPHPDRRQLVSNGFEVNLPDQVEVIVRDLPDPSKVKEERTRLMGYWFVHWFDGKLFHLRIKAGGPNVDGEHRAIRTAEHPWLLRARLDDALEEALPKYAAVKKRPFTFLAQKDELIDAAATAAGLSHRLLNSFKVIPRFALSPKIYEPVDGTTRVGVFVTIGMRYDIEASLRDLLEAGIDLRGMYVVRRKRQPGERGLLGRVRAISDDMVQLFEETDLASVNVNDAKLEGSKENFTRCLSALLGHNYKKLLNALDDQEAGYRTGPRFDDAVRRMGEFLAKKPIRLADNINAQVGDRIVFSNEGQARNVRLAPKVEYVFDRTGAKSAEYAWRGLSQFGPFDRPSFANRSPRILVVYPSSTQGKVENFLSAFRDGMGSNYSGFSKGFVDLMGLTKVEFVMCPVEVSSADRNGAHTKYNSAIEDKLAGAGEVHAGIVVLFEDHARLPDDRNPYIHTKSLLLTLGVPTQQVRMPTVLLEPKSLQYTLQNFSIATYAKLNGTPWTVNHDKAINDELVVGMGLAELSGSRTEKRQRFVGITTVFAGDGSYLLGNVSKECEYEGYSDAIRESMTGILRELKKRNNWRPGDTVRVVFHAHRPLKRVDVASIVFECTREIGSDQNIQMAFVTVSHDHPFVLIDRSERGLEAYKGSTARKGVFAPPRGAISRVGRLTRLLAVNSPQLIKRANTPLPTPLLVSLHPDSTFKDVDYLAEQALKFTSLSWRSTLPAATPVTIFYSERIAELLGRLKSIPNWSSANLNIKLKWSRWFL.

The N-terminal domain stretch occupies residues 1-107 (MAPVQAADEM…ARLDDALEEA (107 aa)). The linker L1 stretch occupies residues 108–182 (LPKYAAVKKR…TIGMRYDIEA (75 aa)). The tract at residues 183–243 (SLRDLLEAGI…VNVNDAKLEG (61 aa)) is PAZ domain. Residues 244–341 (SKENFTRCLS…DRTGAKSAEY (98 aa)) are linker L2. A mid domain region spans residues 342 to 509 (AWRGLSQFGP…SIATYAKLNG (168 aa)). The 313-residue stretch at 445 to 757 (GIVVLFEDHA…IAELLGRLKS (313 aa)) folds into the Piwi domain. The interval 510-777 (TPWTVNHDKA…IKLKWSRWFL (268 aa)) is PIWI domain. Leu777 is a binding site for Mg(2+).

Belongs to the argonaute family. Long pAgo subfamily. It depends on Mg(2+) as a cofactor.

Its function is as follows. A catalytically inactive argonaute protein. Binds 5'-phosphorylated RNA as the guide (gRNA) and short DNA as target DNA (tDNA); does not bind other nucleic acid combinations, does not bind tDNA alone. Has highest affinity for gRNA that begins with 5'-phospho-U and poor affinity for gRNA with 5'-OH. Upon expression in E.coli, plasmid sequences are found in RsAgo, its induction leads to plasmid degradation and suppression of genes encoded on foreign plasmids, suggesting it may also interfere with transcription. Does not interact with preformed gRNA:tDNA duplexes. Mismatches and nt bulges are tolerated in the ternary complex, however, they significantly reduce the affinity of RsAgo:gRNA for tDNA. Mismatched tDNA can cause dissociation of gRNA from RsAgo. In situ binds 2 populations of RNA (15-19 and 45 nucleotides, nt) and a population of ssDNA 22-24 nt in length. The small sense RNA is probably derived from mRNA degradation and strongly enriched for U in the first and U/C in the second positions. The small DNA is enriched for sequences complementary to the RNA, with 3 nt overhangs on both ends; another nuclease may trim the ends. The sequences are largely derived from exogenous plasmids or genome-encoded foreign elements such as prophages and transposons. Forms a ternary complex with gRNA and double-stranded tDNA only when the tDNA is open. The chain is Protein argonaute from Cereibacter sphaeroides (strain ATCC 17025 / ATH 2.4.3) (Rhodobacter sphaeroides).